The following is a 313-amino-acid chain: Glutathionyl-hydroquinone reductase PcpF (313 aa).

C53 functions as the Nucleophile in the catalytic mechanism. Residues W86, 119-122 (RVTI), and 137-138 (ES) contribute to the glutathione site. In terms of domain architecture, GST C-terminal spans 161–285 (PAEFRPEIDR…INLRHAKAHY (125 aa)). The Proton donor/acceptor role is filled by Y184.

This sequence belongs to the GST superfamily. Xi-class GSH transferase family. In terms of assembly, homodimer.

The catalysed reaction is 2-(glutathione-S-yl)-hydroquinone + glutathione = hydroquinone + glutathione disulfide. Its function is as follows. Catalyzes glutathione (GSH)-dependent reduction of glutathionyl-hydroquinones (GS-HQs) to the corresponding hydroquinones. Can act on halogenated substrates such as GS-2,6-dichloro-p-hydroquinone (GS-DiCH) and GS-trichloro-p-hydroquinone (GS-TriCH). Involved in the degradation of pentachlorophenol (PCP), a toxic pollutant. In Sphingobium chlorophenolicum, this protein is Glutathionyl-hydroquinone reductase PcpF.